The primary structure comprises 100 residues: NADH-quinone oxidoreductase subunit K (100 aa).

3 helical membrane passes run 4–24 (LQHG…GLVI), 28–48 (LLFM…AFVV), and 60–80 (VMYI…LALL).

This sequence belongs to the complex I subunit 4L family. In terms of assembly, NDH-1 is composed of 13 different subunits. Subunits NuoA, H, J, K, L, M, N constitute the membrane sector of the complex.

The protein localises to the cell inner membrane. The enzyme catalyses a quinone + NADH + 5 H(+)(in) = a quinol + NAD(+) + 4 H(+)(out). NDH-1 shuttles electrons from NADH, via FMN and iron-sulfur (Fe-S) centers, to quinones in the respiratory chain. The immediate electron acceptor for the enzyme in this species is believed to be ubiquinone. Couples the redox reaction to proton translocation (for every two electrons transferred, four hydrogen ions are translocated across the cytoplasmic membrane), and thus conserves the redox energy in a proton gradient. This Shigella sonnei (strain Ss046) protein is NADH-quinone oxidoreductase subunit K.